The primary structure comprises 1273 residues: Paired amphipathic helix protein Sin3a (1273 aa).

2 disordered regions span residues 1–23 and 87–110; these read MKRRLDDQESPVYAAQQRRIPGS and HPTAVQPHGGQVVQSHAHPAPPVA. Ser10 carries the post-translational modification Phosphoserine. Positions 119-189 constitute a PAH 1 domain; the sequence is QRLKVEDALS…MGFNTFLPPG (71 aa). The interaction with HCFC1 stretch occupies residues 119 to 196; it reads QRLKVEDALS…PPGYKIEVQT (78 aa). Glycyl lysine isopeptide (Lys-Gly) (interchain with G-Cter in SUMO2) cross-links involve residues Lys122 and Lys134. The interval 205 to 297 is disordered; that stretch reads PGQVHQIPTH…ISLGTAPSLQ (93 aa). The interaction with REST stretch occupies residues 205–480; it reads PGQVHQIPTH…RKALRSAEAY (276 aa). Positions 228-237 are enriched in low complexity; it reads SQPSAQSAPA. The span at 238–248 shows a compositional bias: pro residues; sequence PAQPAPQPPPA. Residues 252-266 show a composition bias toward polar residues; sequence KPSQLQAHTPASQQT. The segment covering 267–282 has biased composition (pro residues); that stretch reads PPLPPYASPRSPPVQP. Ser277 carries the post-translational modification Phosphoserine. Position 284 is a phosphothreonine (Thr284). The span at 284–297 shows a compositional bias: polar residues; the sequence is TPVTISLGTAPSLQ. Residues 300–383 enclose the PAH 2 domain; that stretch reads QPVEFNHAIN…SEFGQFLPDA (84 aa). Residues 398-446 are disordered; it reads DSVRNDHGGTVKKPQLNNKPQRPSQNGCQIRRHPTGTTPPVKKKPKLLN. Over residues 412 to 425 the composition is skewed to polar residues; the sequence is QLNNKPQRPSQNGC. Positions 456 to 525 constitute a PAH 3 domain; sequence SKHGGGTESL…NWFKNFLGYK (70 aa). The interval 458-525 is interaction with SAP30; it reads HGGGTESLFF…NWFKNFLGYK (68 aa). Lys469 carries the post-translational modification N6-acetyllysine. Residues 523 to 850 form an interaction with NCOR1 region; sequence GYKESVHLET…EMDVDEATGA (328 aa). Positions 524–659 are interaction with SUDS3 and SAP130; the sequence is YKESVHLETY…KFRLDNTLGG (136 aa). Lys563 participates in a covalent cross-link: Glycyl lysine isopeptide (Lys-Gly) (interchain with G-Cter in SUMO2). Residues 687 to 829 form an interaction with HDAC1 and ARID4B region; it reads NPSIAVPIVL…IPDLLFAQRG (143 aa). Ser832 and Ser860 each carry phosphoserine. Lys865 and Lys875 each carry N6-acetyllysine. The segment at 888-967 is interaction with OGT; that stretch reads VNNNWYIFMR…YYPAFLDMVR (80 aa). Positions 903-932 form a coiled coil; it reads CLRLLRICSQAERQIEEENREREWEREVLG. Phosphoserine is present on residues Ser940, Ser1089, and Ser1112. The segment at 1136 to 1156 is disordered; that stretch reads CQRGREQQEKEGKEGNSKKTM. Basic and acidic residues predominate over residues 1138-1156; it reads RGREQQEKEGKEGNSKKTM.

As to quaternary structure, interacts with ARID4B, BRMS1L, HCFC1, HDAC1, HDAC2, MXI1, SAP30L, SAP130, SFPQ and TOPORS. Interacts with OGT (via TPRs 1-6); the interaction mediates transcriptional repression in parallel with histone deacetylase. Interacts with BAZ2A, MXD1, MXD3, MXD4, MBD2, DACH1, NCOR1, NR4A2, REST, RLIM, SAP30, SETDB1, SMYD2, and SUDS3. Interacts with PHF12 in a complex composed of HDAC1, PHF12 and SAP30. Interacts with TET1; the interaction recruits SIN3A to gene promoters. The large PER complex involved in the histone deacetylation is composed of at least HDAC1, PER2, SFPQ and SIN3A. Interacts with KLF11. Interacts with PPHLN1. Found in a complex with YY1, GON4L and HDAC1. Interacts (via PAH2) with FOXK1. Interacts with FOXK2. Found in a complex composed of at least SINHCAF, SIN3A, HDAC1, SAP30, RBBP4, OGT and TET1. Interacts with SINHCAF. Interacts with SPHK2. Post-translationally, SUMO1 sumoylated by TOPORS. Probably desumoylated by SENP2. As to expression, expressed in the developing brain, with highest levels of expression detected in the ventricular zone of various cortical regions.

It is found in the nucleus. It localises to the nucleolus. Acts as a transcriptional repressor. Corepressor for REST. Interacts with MXI1 to repress MYC responsive genes and antagonize MYC oncogenic activities. Also interacts with MXD1-MAX heterodimers to repress transcription by tethering SIN3A to DNA. Acts cooperatively with OGT to repress transcription in parallel with histone deacetylation. Involved in the control of the circadian rhythms. Required for the transcriptional repression of circadian target genes, such as PER1, mediated by the large PER complex through histone deacetylation. Cooperates with FOXK1 to regulate cell cycle progression probably by repressing cell cycle inhibitor genes expression. Required for cortical neuron differentiation and callosal axon elongation. This chain is Paired amphipathic helix protein Sin3a, found in Homo sapiens (Human).